The following is a 65-amino-acid chain: Cecropin (65 aa).

The N-terminal stretch at 1–23 (MNFVKVLFFISACILIMLSAVSG) is a signal peptide.

This sequence belongs to the cecropin family.

It localises to the secreted. In terms of biological role, has antibacterial activity. The polypeptide is Cecropin (LOC113514368) (Galleria mellonella (Greater wax moth)).